Reading from the N-terminus, the 418-residue chain is Phosphoglycerate kinase (418 aa).

Residues 18 to 20 (DFN), R34, 57 to 60 (HLGR), R115, and R171 each bind substrate. ATP-binding positions include K224, G315, E346, and 375–378 (GGDS).

This sequence belongs to the phosphoglycerate kinase family. In terms of assembly, monomer.

The protein resides in the cytoplasm. The enzyme catalyses (2R)-3-phosphoglycerate + ATP = (2R)-3-phospho-glyceroyl phosphate + ADP. It functions in the pathway carbohydrate degradation; glycolysis; pyruvate from D-glyceraldehyde 3-phosphate: step 2/5. The polypeptide is Phosphoglycerate kinase (Porphyromonas gingivalis (strain ATCC BAA-308 / W83)).